We begin with the raw amino-acid sequence, 210 residues long: Thymidylate kinase (210 aa).

10–17 provides a ligand contact to ATP; sequence GPEGAGKS.

It belongs to the thymidylate kinase family.

The enzyme catalyses dTMP + ATP = dTDP + ADP. Phosphorylation of dTMP to form dTDP in both de novo and salvage pathways of dTTP synthesis. The sequence is that of Thymidylate kinase from Pseudomonas putida (strain GB-1).